The chain runs to 180 residues: Nascent polypeptide-associated complex subunit alpha (180 aa).

The NAC-A/B domain maps to 16 to 80; the sequence is SKNEKKAREL…AKVDDMNKRI (65 aa). The tract at residues 81 to 113 is disordered; the sequence is AEAQQQQAQQDALSKAAGETGEAGEEDKSQDAI. Residues 82 to 100 are compositionally biased toward low complexity; it reads EAQQQQAQQDALSKAAGET. The UBA domain occupies 142–179; it reads LDAKDIDIIVEQTQVSRAKAVKALRVHDGDMVNAIMEL.

This sequence belongs to the NAC-alpha family. In terms of assembly, part of the nascent polypeptide-associated complex (NAC), consisting of EGD2 and EGD1. NAC associates with ribosomes via EGD1.

The protein resides in the cytoplasm. The protein localises to the nucleus. In terms of biological role, component of the nascent polypeptide-associated complex (NAC), a dynamic component of the ribosomal exit tunnel, protecting the emerging polypeptides from interaction with other cytoplasmic proteins to ensure appropriate nascent protein targeting. The NAC complex also promotes mitochondrial protein import by enhancing productive ribosome interactions with the outer mitochondrial membrane and blocks the inappropriate interaction of ribosomes translating non-secretory nascent polypeptides with translocation sites in the membrane of the endoplasmic reticulum. EGD2 may also be involved in transcription regulation. The polypeptide is Nascent polypeptide-associated complex subunit alpha (EGD2) (Debaryomyces hansenii (strain ATCC 36239 / CBS 767 / BCRC 21394 / JCM 1990 / NBRC 0083 / IGC 2968) (Yeast)).